A 136-amino-acid polypeptide reads, in one-letter code: Small ribosomal subunit protein uS8 (136 aa).

It belongs to the universal ribosomal protein uS8 family. As to quaternary structure, part of the 30S ribosomal subunit. Contacts proteins S5 and S12.

Its function is as follows. One of the primary rRNA binding proteins, it binds directly to 16S rRNA central domain where it helps coordinate assembly of the platform of the 30S subunit. The chain is Small ribosomal subunit protein uS8 from Synechococcus sp. (strain JA-2-3B'a(2-13)) (Cyanobacteria bacterium Yellowstone B-Prime).